Consider the following 195-residue polypeptide: Cysteine/O-acetylserine efflux protein (195 aa).

Residues Met1–Phe9 lie on the Periplasmic side of the membrane. A helical membrane pass occupies residues Trp10 to Thr32. Over Ser33–Met46 the chain is Cytoplasmic. A helical membrane pass occupies residues Ser47–Ile67. Residues Asp68 to Pro69 lie on the Periplasmic side of the membrane. The helical transmembrane segment at Ala70–Ile90 threads the bilayer. Over Ala91–Pro104 the chain is Cytoplasmic. The helical transmembrane segment at Ile105–Val125 threads the bilayer. The Periplasmic segment spans residues Thr126 to Trp141. The chain crosses the membrane as a helical span at residues Val142–Leu162. The Cytoplasmic portion of the chain corresponds to Ala163–Arg176. The chain crosses the membrane as a helical span at residues Gln177 to Phe194. Position 195 (Tyr195) is a topological domain, periplasmic.

It belongs to the Rht family.

It localises to the cell inner membrane. It catalyses the reaction O-acetyl-L-serine(in) = O-acetyl-L-serine(out). The catalysed reaction is L-cysteine(in) = L-cysteine(out). Its function is as follows. Exporter of O-acetylserine (OAS) and cysteine. This is Cysteine/O-acetylserine efflux protein (eamB) from Shigella flexneri serotype 5b (strain 8401).